The primary structure comprises 93 residues: uncharacterized protein (93 aa).

Belongs to the SIMIBI class G3E GTPase family. ArgK/MeaB subfamily.

This is an uncharacterized protein from Streptomyces virginiae (Streptomyces cinnamonensis).